The primary structure comprises 129 residues: Small ribosomal subunit protein uS11c (129 aa).

The protein belongs to the universal ribosomal protein uS11 family. In terms of assembly, part of the 30S ribosomal subunit.

Its subcellular location is the plastid. It localises to the chloroplast. The polypeptide is Small ribosomal subunit protein uS11c (Rhodomonas salina (Cryptomonas salina)).